The following is a 193-amino-acid chain: Erythropoietin (193 aa).

The first 27 residues, 1–27 (MGVHECPAWLWLLLSLLSLPLGLPVLG), serve as a signal peptide directing secretion. 2 disulfides stabilise this stretch: cysteine 34/cysteine 188 and cysteine 56/cysteine 60. The N-linked (GlcNAc...) asparagine glycan is linked to asparagine 51. Residues asparagine 65 and asparagine 110 are each glycosylated (N-linked (GlcNAc...) asparagine). Serine 153 carries O-linked (GalNAc...) serine glycosylation.

The protein belongs to the EPO/TPO family. In terms of tissue distribution, produced by kidney or liver of adult mammals and by liver of fetal or neonatal mammals.

The protein resides in the secreted. Its function is as follows. Hormone involved in the regulation of erythrocyte proliferation and differentiation and the maintenance of a physiological level of circulating erythrocyte mass. Binds to EPOR leading to EPOR dimerization and JAK2 activation thereby activating specific downstream effectors, including STAT1 and STAT3. This is Erythropoietin (EPO) from Homo sapiens (Human).